A 75-amino-acid chain; its full sequence is Small ribosomal subunit protein bS18 (75 aa).

This sequence belongs to the bacterial ribosomal protein bS18 family. Part of the 30S ribosomal subunit. Forms a tight heterodimer with protein bS6.

In terms of biological role, binds as a heterodimer with protein bS6 to the central domain of the 16S rRNA, where it helps stabilize the platform of the 30S subunit. In Baumannia cicadellinicola subsp. Homalodisca coagulata, this protein is Small ribosomal subunit protein bS18.